Reading from the N-terminus, the 466-residue chain is Probable Xaa-Pro aminopeptidase pepP (466 aa).

Mn(2+) contacts are provided by Asp264, Asp275, Glu398, and Glu438.

Belongs to the peptidase M24B family. The cofactor is Mn(2+).

The enzyme catalyses Release of any N-terminal amino acid, including proline, that is linked to proline, even from a dipeptide or tripeptide.. In terms of biological role, catalyzes the removal of a penultimate prolyl residue from the N-termini of peptides. This Aspergillus clavatus (strain ATCC 1007 / CBS 513.65 / DSM 816 / NCTC 3887 / NRRL 1 / QM 1276 / 107) protein is Probable Xaa-Pro aminopeptidase pepP (pepP).